We begin with the raw amino-acid sequence, 161 residues long: Cyclic pyranopterin monophosphate synthase (161 aa).

Substrate-binding positions include 75–77 (MCH) and 114–115 (ME). Aspartate 129 is an active-site residue.

Belongs to the MoaC family. In terms of assembly, homohexamer; trimer of dimers.

It carries out the reaction (8S)-3',8-cyclo-7,8-dihydroguanosine 5'-triphosphate = cyclic pyranopterin phosphate + diphosphate. Its pathway is cofactor biosynthesis; molybdopterin biosynthesis. Catalyzes the conversion of (8S)-3',8-cyclo-7,8-dihydroguanosine 5'-triphosphate to cyclic pyranopterin monophosphate (cPMP). The polypeptide is Cyclic pyranopterin monophosphate synthase (Staphylococcus carnosus (strain TM300)).